Consider the following 78-residue polypeptide: Large ribosomal subunit protein bL28 (78 aa).

It belongs to the bacterial ribosomal protein bL28 family.

This Erwinia tasmaniensis (strain DSM 17950 / CFBP 7177 / CIP 109463 / NCPPB 4357 / Et1/99) protein is Large ribosomal subunit protein bL28.